Consider the following 159-residue polypeptide: Transcriptional repressor NrdR (159 aa).

The segment at 3–34 (CPKCGYNKSSVVDSRQAEEGTTIRRRRECEKC) is a zinc-finger region. Residues 49–139 (LLVIKKDGTR…VYKSFKDVDE (91 aa)) form the ATP-cone domain.

It belongs to the NrdR family. Zn(2+) serves as cofactor.

Functionally, negatively regulates transcription of bacterial ribonucleotide reductase nrd genes and operons by binding to NrdR-boxes. The protein is Transcriptional repressor NrdR of Streptococcus agalactiae serotype Ia (strain ATCC 27591 / A909 / CDC SS700).